A 702-amino-acid chain; its full sequence is MARKTPIERYRNIGISAHIDAGKTTTTERILFYTGVNHKIGEVHDGAATMDWMEQEQERGITITSAATTCFWKGMDLSLPEHRINIIDTPGHVDFTIEVERSMRVLDGACMVYCAVGGVQPQSETVWRQANKYKVPRLAFVNKMDRTGANFFKTTSQMEGRLGQPVPVVFPIGAEENFRGVIDLLKMKAIIWDEASQGMKFEYQDPAELLSDAEKWRSAMVEAAAEANEELMNRYLESGELSEEEIKAWLEKRVLNAEQILAYALRTAFKNKGVQAMLAVIDFLPSPVDIPPCNGTDDNEHDTVRRASDDEKFSALAFKLMTDPYVGQLTFIRVYSGILQSGDTVYNPIKGKKERIGRFVQMHANQRDEIKEVRAGDIAPAIGLREITTGETLCDPESIITLEKMVFPEPVISQAVEPKTKADQEKMGIALQRVAQEDPSFRVKTDEESGQTIISGMGELHLEILVDRMKREFGVEANVGKPQVAYRETIRKTVDDVDGKQAKHSGGRGHYGHVVIAMYRLDRESKPKGYDCMNDIKGGVSPGEYIPPVDNGIHEQLNSGVLAGYPVVDVKVTLHFGSYHEVDSSEQAFKMAASIGFKEGCRKANPVILEPMMAVEVETPEDYAGNVMGDLSSRRGMVQGMDEIVTGGKVIRAEVPLSEMFGYSTTLRSMSQGRATYSMEFKHYAEAPRNVAERSSARVQGK.

The 189-residue stretch at 8-196 (ERYRNIGISA…MKAIIWDEAS (189 aa)) folds into the tr-type G domain. GTP-binding positions include 17–24 (AHIDAGKT), 88–92 (DTPGH), and 142–145 (NKMD).

Belongs to the TRAFAC class translation factor GTPase superfamily. Classic translation factor GTPase family. EF-G/EF-2 subfamily.

It is found in the cytoplasm. Functionally, catalyzes the GTP-dependent ribosomal translocation step during translation elongation. During this step, the ribosome changes from the pre-translocational (PRE) to the post-translocational (POST) state as the newly formed A-site-bound peptidyl-tRNA and P-site-bound deacylated tRNA move to the P and E sites, respectively. Catalyzes the coordinated movement of the two tRNA molecules, the mRNA and conformational changes in the ribosome. This is Elongation factor G (fusA) from Thiomonas delicata (Thiomonas cuprina).